The chain runs to 292 residues: Pyridoxal 5'-phosphate synthase subunit PdxS (292 aa).

D22 lines the D-ribose 5-phosphate pocket. K79 (schiff-base intermediate with D-ribose 5-phosphate) is an active-site residue. G151 contributes to the D-ribose 5-phosphate binding site. A D-glyceraldehyde 3-phosphate-binding site is contributed by R163. Residues G212 and 233-234 contribute to the D-ribose 5-phosphate site; that span reads GS.

It belongs to the PdxS/SNZ family. In terms of assembly, in the presence of PdxT, forms a dodecamer of heterodimers.

The catalysed reaction is aldehydo-D-ribose 5-phosphate + D-glyceraldehyde 3-phosphate + L-glutamine = pyridoxal 5'-phosphate + L-glutamate + phosphate + 3 H2O + H(+). It functions in the pathway cofactor biosynthesis; pyridoxal 5'-phosphate biosynthesis. In terms of biological role, catalyzes the formation of pyridoxal 5'-phosphate from ribose 5-phosphate (RBP), glyceraldehyde 3-phosphate (G3P) and ammonia. The ammonia is provided by the PdxT subunit. Can also use ribulose 5-phosphate and dihydroxyacetone phosphate as substrates, resulting from enzyme-catalyzed isomerization of RBP and G3P, respectively. This chain is Pyridoxal 5'-phosphate synthase subunit PdxS, found in Ruminiclostridium cellulolyticum (strain ATCC 35319 / DSM 5812 / JCM 6584 / H10) (Clostridium cellulolyticum).